Reading from the N-terminus, the 181-residue chain is NAD(P)H-quinone oxidoreductase subunit I, chloroplastic (181 aa).

2 consecutive 4Fe-4S ferredoxin-type domains span residues 55-84 (GRIHFEFDKCIACEVCVRVCPINLPVVDWE) and 95-124 (KNYSIDFAVCIFCGNCVEYCPTNCLSMTEE). 8 residues coordinate [4Fe-4S] cluster: cysteine 64, cysteine 67, cysteine 70, cysteine 74, cysteine 104, cysteine 107, cysteine 110, and cysteine 114.

It belongs to the complex I 23 kDa subunit family. NDH is composed of at least 16 different subunits, 5 of which are encoded in the nucleus. [4Fe-4S] cluster serves as cofactor.

Its subcellular location is the plastid. It localises to the chloroplast thylakoid membrane. It catalyses the reaction a plastoquinone + NADH + (n+1) H(+)(in) = a plastoquinol + NAD(+) + n H(+)(out). The enzyme catalyses a plastoquinone + NADPH + (n+1) H(+)(in) = a plastoquinol + NADP(+) + n H(+)(out). Its function is as follows. NDH shuttles electrons from NAD(P)H:plastoquinone, via FMN and iron-sulfur (Fe-S) centers, to quinones in the photosynthetic chain and possibly in a chloroplast respiratory chain. The immediate electron acceptor for the enzyme in this species is believed to be plastoquinone. Couples the redox reaction to proton translocation, and thus conserves the redox energy in a proton gradient. In Angiopteris evecta (Mule's foot fern), this protein is NAD(P)H-quinone oxidoreductase subunit I, chloroplastic.